The chain runs to 211 residues: C-type lectin domain family 2 member L (211 aa).

Residues 1-53 (MEPAREPPARARPPPPAARPAPAAPRPRSPAEAEARGPEGLLRRSGSGYEGST) are disordered. Over residues 10–28 (RARPPPPAARPAPAAPRPR) the composition is skewed to pro residues. A Phosphoserine modification is found at serine 29. A helical membrane pass occupies residues 66–86 (LLLGAIAVLLFAILVVMSILA). Positions 104-206 (YGRKCYYFSE…CLTTRPWVCS (103 aa)) constitute a C-type lectin domain. Disulfide bonds link cysteine 125-cysteine 205 and cysteine 184-cysteine 197.

The protein localises to the membrane. The chain is C-type lectin domain family 2 member L (Clec2l) from Mus musculus (Mouse).